A 468-amino-acid chain; its full sequence is UDP-N-acetylmuramate--L-alanine ligase (468 aa).

Residue G114 to T120 participates in ATP binding.

The protein belongs to the MurCDEF family.

The protein localises to the cytoplasm. The enzyme catalyses UDP-N-acetyl-alpha-D-muramate + L-alanine + ATP = UDP-N-acetyl-alpha-D-muramoyl-L-alanine + ADP + phosphate + H(+). Its pathway is cell wall biogenesis; peptidoglycan biosynthesis. In terms of biological role, cell wall formation. The protein is UDP-N-acetylmuramate--L-alanine ligase of Brucella anthropi (strain ATCC 49188 / DSM 6882 / CCUG 24695 / JCM 21032 / LMG 3331 / NBRC 15819 / NCTC 12168 / Alc 37) (Ochrobactrum anthropi).